Here is a 249-residue protein sequence, read N- to C-terminus: 5'-nucleotidase SurE (249 aa).

Aspartate 9, aspartate 10, serine 40, and asparagine 92 together coordinate a divalent metal cation.

It belongs to the SurE nucleotidase family. A divalent metal cation serves as cofactor.

It localises to the cytoplasm. The catalysed reaction is a ribonucleoside 5'-phosphate + H2O = a ribonucleoside + phosphate. Functionally, nucleotidase that shows phosphatase activity on nucleoside 5'-monophosphates. This Shewanella baltica (strain OS195) protein is 5'-nucleotidase SurE.